The primary structure comprises 238 residues: MGNKNIKPSKENRLSILSKDKMDSFKRGSFREKSRATIQRFSSLRREHIKVDHPDKFLELKRGIYEIIQKSSSIDVDKRTKLMSNIKTMMINPFMIEGLMTSLENLDPDNKMSYSSVMILGEFDIINISDNEAAFEFINSLLKSLLLEYSISNDLLYAHINALEYIIKNTFNVPERQLILRGQYLTPIFSDLLKYAGLTIKSNILMWNKQFIKPVSDLYTSIRLLHCVTESYKVIGMG.

Belongs to the orthopoxvirus A47 protein family.

This Vaccinia virus (strain Ankara) (VACV) protein is Protein A47.